Reading from the N-terminus, the 395-residue chain is Tryptophan--tRNA ligase, cytoplasmic (395 aa).

The 'HIGH' region signature appears at 91–100 (PSSDSMHLGH). Residues 275 to 279 (KMSAS) carry the 'KMSKS' region motif. Threonine 288 and threonine 290 each carry phosphothreonine.

It belongs to the class-I aminoacyl-tRNA synthetase family.

Its subcellular location is the cytoplasm. It catalyses the reaction tRNA(Trp) + L-tryptophan + ATP = L-tryptophyl-tRNA(Trp) + AMP + diphosphate + H(+). This is Tryptophan--tRNA ligase, cytoplasmic (wrs1) from Schizosaccharomyces pombe (strain 972 / ATCC 24843) (Fission yeast).